Consider the following 83-residue polypeptide: UPF0270 protein CGSHiEE_07180 (83 aa).

Belongs to the UPF0270 family.

The protein is UPF0270 protein CGSHiEE_07180 of Haemophilus influenzae (strain PittEE).